The primary structure comprises 101 residues: Small ribosomal subunit protein uS14 (101 aa).

Belongs to the universal ribosomal protein uS14 family. As to quaternary structure, part of the 30S ribosomal subunit. Contacts proteins S3 and S10.

Its function is as follows. Binds 16S rRNA, required for the assembly of 30S particles and may also be responsible for determining the conformation of the 16S rRNA at the A site. In Hahella chejuensis (strain KCTC 2396), this protein is Small ribosomal subunit protein uS14.